A 266-amino-acid chain; its full sequence is Undecaprenyl-diphosphatase (266 aa).

8 consecutive transmembrane segments (helical) span residues 1 to 21 (MTLT…FLPI), 39 to 59 (QGLA…MIYF), 87 to 107 (WWVI…KAFI), 111 to 131 (ARSA…LWYA), 150 to 172 (LIVG…ITMT), 187 to 207 (FSFL…TLDL), 218 to 238 (ALIV…YLFL), and 244 to 264 (IGML…LLFV).

It belongs to the UppP family.

The protein resides in the cell inner membrane. It carries out the reaction di-trans,octa-cis-undecaprenyl diphosphate + H2O = di-trans,octa-cis-undecaprenyl phosphate + phosphate + H(+). In terms of biological role, catalyzes the dephosphorylation of undecaprenyl diphosphate (UPP). Confers resistance to bacitracin. This chain is Undecaprenyl-diphosphatase, found in Pseudoalteromonas atlantica (strain T6c / ATCC BAA-1087).